A 715-amino-acid chain; its full sequence is Targeting protein for Xklp2-B (715 aa).

Residues 36-167 (NAENIPPDQK…LTMPATPTVL (132 aa)) form a disordered region. Polar residues predominate over residues 47-56 (LSETSVNAEQ). The span at 85–103 (QTKRSARRMSKKHRQKILL) shows a compositional bias: basic residues. The segment covering 104 to 115 (KMKETHLEKETA) has biased composition (basic and acidic residues). Residues 141 to 152 (QPTSSHHGTTSP) are compositionally biased toward polar residues. S204 is modified (phosphoserine; by plk1). 2 disordered regions span residues 260–291 (PPTSPVQVTKGGHTVPKPFNLSKGKRKHEEAS) and 314–337 (RSRQKEMEGPSPVKMLKPKLTNPK).

Belongs to the TPX2 family. In terms of assembly, associates with microtubules. Interacts with aurka and plk1. Interacts with kif15. Phosphorylated during mitosis. Hyperphosphorylated upon assembly of microtubules.

Its subcellular location is the nucleus. The protein localises to the cytoplasm. It localises to the cytoskeleton. It is found in the spindle. The protein resides in the spindle pole. Functionally, spindle assembly factor. Required for normal assembly of mitotic spindles. Mediates the binding kif15 and aurka to spindle microtubules. Required for targeting kif15 to microtubule minus ends. Activates aurka by promoting its autophosphorylation and protects the phosphorylated residue against dephosphorylation. This Xenopus laevis (African clawed frog) protein is Targeting protein for Xklp2-B (tpx2-b).